Here is a 359-residue protein sequence, read N- to C-terminus: 3-dehydroshikimate dehydratase (359 aa).

This sequence belongs to the bacterial two-domain DSD family. In terms of assembly, monomer.

It carries out the reaction 3-dehydroshikimate = 3,4-dihydroxybenzoate + H2O. Its pathway is aromatic compound metabolism; 3,4-dihydroxybenzoate biosynthesis; 3,4-dihydroxybenzoate from 3-dehydroquinate: step 2/2. Divalent cations such as Mg(2+), but also MO(2+), Mn(2+), Ba(2+), and Co(2+) activate the enzyme, whereas monovalent cations as K(+), Na(+), and NH4(+) decrease its activity slightly. Its function is as follows. 3-dehydroshikimate dehydratase; part of the qa gene cluster that mediates the catabolism of quinic acid (QA) and as such, allows the use of QA as a sole carbon source. Catalyzes the third reaction in the inducible quinic acid catabolic pathway by converting dehydroshikimate to protocatechuate. The qa cluster encodes 3 inducible enymes (qa-2, qa-3 and qa-4) catalyzing the first three reactions in the catabolism of quinic acid to protocatechuic acid (also known as 3,4-Dihydroxybenzoic acid). This chain is 3-dehydroshikimate dehydratase, found in Neurospora crassa (strain ATCC 24698 / 74-OR23-1A / CBS 708.71 / DSM 1257 / FGSC 987).